An 888-amino-acid chain; its full sequence is Dilute domain-containing protein YPR089W (888 aa).

The region spanning 360-745 is the Dilute domain; the sequence is DIVLQSYWLS…KKFLNNKIKD (386 aa). Disordered stretches follow at residues 462–504, 805–827, and 865–888; these read KEQQ…NNSS, KQRQNEPQISRTNSGTSDFTGDE, and LNIPSSTAQRPAWSNNDDMEQNPW. Composition is skewed to polar residues over residues 809-823 and 867-880; these read NEPQISRTNSGTSDF and IPSSTAQRPAWSNN.

Its subcellular location is the golgi apparatus. The protein is Dilute domain-containing protein YPR089W of Saccharomyces cerevisiae (strain ATCC 204508 / S288c) (Baker's yeast).